The primary structure comprises 208 residues: Large ribosomal subunit protein uL3 (208 aa).

Residues 134–153 (SKFHREAGSTGQCTSPGRTF) form a disordered region.

The protein belongs to the universal ribosomal protein uL3 family. As to quaternary structure, part of the 50S ribosomal subunit. Forms a cluster with proteins L14 and L19.

Its function is as follows. One of the primary rRNA binding proteins, it binds directly near the 3'-end of the 23S rRNA, where it nucleates assembly of the 50S subunit. The sequence is that of Large ribosomal subunit protein uL3 from Treponema pallidum (strain Nichols).